Here is a 62-residue protein sequence, read N- to C-terminus: Photosystem II reaction center protein Z (62 aa).

Transmembrane regions (helical) follow at residues 8–28 (ALISLVLVSFVLVVGVPVAYA) and 41–61 (WLGSGVWIALVLLVGLLNFFV).

This sequence belongs to the PsbZ family. In terms of assembly, PSII is composed of 1 copy each of membrane proteins PsbA, PsbB, PsbC, PsbD, PsbE, PsbF, PsbH, PsbI, PsbJ, PsbK, PsbL, PsbM, PsbT, PsbX, PsbY, PsbZ, Psb30/Ycf12, peripheral proteins PsbO, CyanoQ (PsbQ), PsbU, PsbV and a large number of cofactors. It forms dimeric complexes.

It localises to the cellular thylakoid membrane. Its function is as follows. May control the interaction of photosystem II (PSII) cores with the light-harvesting antenna, regulates electron flow through the 2 photosystem reaction centers. PSII is a light-driven water plastoquinone oxidoreductase, using light energy to abstract electrons from H(2)O, generating a proton gradient subsequently used for ATP formation. The protein is Photosystem II reaction center protein Z of Trichormus variabilis (strain ATCC 29413 / PCC 7937) (Anabaena variabilis).